The chain runs to 279 residues: Pantothenate synthetase (279 aa).

26 to 33 (MGNLHEGH) is a binding site for ATP. Catalysis depends on His33, which acts as the Proton donor. (R)-pantoate is bound at residue Gln57. Gln57 is a beta-alanine binding site. 144-147 (GKKD) contacts ATP. Gln150 is a binding site for (R)-pantoate. Residues Val173 and 181–184 (LSSR) contribute to the ATP site.

This sequence belongs to the pantothenate synthetase family. In terms of assembly, homodimer.

Its subcellular location is the cytoplasm. The catalysed reaction is (R)-pantoate + beta-alanine + ATP = (R)-pantothenate + AMP + diphosphate + H(+). The protein operates within cofactor biosynthesis; (R)-pantothenate biosynthesis; (R)-pantothenate from (R)-pantoate and beta-alanine: step 1/1. In terms of biological role, catalyzes the condensation of pantoate with beta-alanine in an ATP-dependent reaction via a pantoyl-adenylate intermediate. This Burkholderia cenocepacia (strain ATCC BAA-245 / DSM 16553 / LMG 16656 / NCTC 13227 / J2315 / CF5610) (Burkholderia cepacia (strain J2315)) protein is Pantothenate synthetase.